Consider the following 84-residue polypeptide: Large ribosomal subunit protein bL27 (84 aa).

The tract at residues 1-22 (MAHKKAGGSTRNGRDSESKRLG) is disordered.

The protein belongs to the bacterial ribosomal protein bL27 family.

The chain is Large ribosomal subunit protein bL27 from Shewanella pealeana (strain ATCC 700345 / ANG-SQ1).